Consider the following 249-residue polypeptide: Eukaryotic translation initiation factor 3 subunit K (249 aa).

The PCI domain maps to 46–222; the sequence is FDCYANLALL…VKVPTNKENE (177 aa).

This sequence belongs to the eIF-3 subunit K family. Component of the eukaryotic translation initiation factor 3 (eIF-3) complex.

Its subcellular location is the cytoplasm. Component of the eukaryotic translation initiation factor 3 (eIF-3) complex, which is involved in protein synthesis of a specialized repertoire of mRNAs and, together with other initiation factors, stimulates binding of mRNA and methionyl-tRNAi to the 40S ribosome. The eIF-3 complex specifically targets and initiates translation of a subset of mRNAs involved in cell proliferation. The polypeptide is Eukaryotic translation initiation factor 3 subunit K (Neosartorya fischeri (strain ATCC 1020 / DSM 3700 / CBS 544.65 / FGSC A1164 / JCM 1740 / NRRL 181 / WB 181) (Aspergillus fischerianus)).